We begin with the raw amino-acid sequence, 247 residues long: Vacuolar iron transporter 1 (247 aa).

Residues 1-33 are Cytoplasmic-facing; that stretch reads MVIAGVSPPTPSSENLLQEHEEKHFTATDVVRD. The chain crosses the membrane as a helical span at residues 34-54; it reads VIIGVSDGLTVPFALAAGLSG. Over 55-60 the chain is Vacuolar; sequence ANVPSS. The chain crosses the membrane as a helical span at residues 61 to 81; the sequence is LILTAGIAEVAAGAISMGLGG. Residues 82-167 are Cytoplasmic-facing; sequence YLAAKSEEDH…PRRALESAMT (86 aa). Fe cation contacts are provided by glutamate 99, glutamate 102, glutamate 110, glutamate 113, methionine 146, and glutamate 150. A helical transmembrane segment spans residues 168–188; sequence IALAYVVGGLVPLSPYFFIPF. Over 189–191 the chain is Vacuolar; that stretch reads AKQ. Residues 192–212 traverse the membrane as a helical segment; it reads AMITSIAVTLLALVVFGYIKG. At 213-219 the chain is on the cytoplasmic side; sequence RFTGSNP. The helical transmembrane segment at 220 to 240 threads the bilayer; it reads VLSSIQTAIIGALASAAAYAM. Topologically, residues 241-247 are vacuolar; that stretch reads AKAVQSV.

This sequence belongs to the CCC1 family. Expressed at high levels in the blue epidermal cells of the inner bottom part of the petal (at protein level). No detectable expression in parenchyma and epidermis of the purple segments of the petal, parenchyma of the blue segments, leaf, stem, bulb and root (at protein level). High levels of mRNA in the blue epidermal cells of the inner bottom part of the petal. Low-levels of mRNA in the purple segments of the petal, stem, leaf, root, bulb and pistil.

The protein localises to the vacuole membrane. It catalyses the reaction Fe(2+)(in) = Fe(2+)(out). Its function is as follows. Vacuolar iron transporter involved in the transfer of iron ions from the cytosol to the vacuole for intracellular iron storage. Plays an essential role in the development of blue coloration in tulip petals most likely due to the accumulation of ferrous ions that can form complexes with anthocyanins. The protein is Vacuolar iron transporter 1 of Tulipa gesneriana (Garden tulip).